The primary structure comprises 879 residues: Pentatricopeptide repeat-containing protein At1g71210, mitochondrial (879 aa).

The transit peptide at 1 to 44 directs the protein to the mitochondrion; that stretch reads MLRCWSVTVERSCEGMLLRRRILSLSASSFRNFTSGNNGDAIPF. PPR repeat units lie at residues 181 to 215, 216 to 246, 250 to 280, 285 to 319, 320 to 355, 356 to 390, 391 to 425, 426 to 460, 461 to 495, 496 to 530, 531 to 565, 566 to 597, 602 to 636, 637 to 667, 671 to 705, and 706 to 740; these read SLRLCDALVVGYAVAGRTDIALQHFGNMRFRGLDL, DSFGYHVLLNALVEEKCFDSFDVIFDQISVR, CAVTHSILVKKFCKQGKLDEAEDYLRALLPN, CGSGLGILVDALCSKRKFQEATKLLDEIKLVGTVN, MDRAYNIWIRALIKAGFLNNPADFLQKISPLEGCEL, EVFRYNSMVFQLLKENNLDGVYDILTEMMVRGVSP, NKKTMNAALCFFCKAGFVDEALELYRSRSEIGFAP, TAMSYNYLIHTLCANESVEQAYDVLKGAIDRGHFL, GGKTFSTLTNALCWKGKPDMARELVIAAAERDLLP, KRIAGCKIISALCDVGKVEDALMINELFNKSGVDT, SFKMFTSLIYGSITLMRGDIAAKLIIRMQEKGYTP, TRSLYRNVIQCVCEMESGEKNFFTTLLKFQLS, KVQAYNLFIEGAGFAGKPKLARLVYDMMDRDGITP, TVASNILMLQSYLKNEKIADALHFFHDLREQ, KKRLYQVMIVGLCKANKLDDAMHFLEEMKGEGLQP, and SIECYEVNIQKLCNEEKYDEAVGLVNEFRKSGRRI.

Belongs to the PPR family. P subfamily.

It localises to the mitochondrion. The sequence is that of Pentatricopeptide repeat-containing protein At1g71210, mitochondrial from Arabidopsis thaliana (Mouse-ear cress).